Reading from the N-terminus, the 206-residue chain is dTTP/UTP pyrophosphatase (206 aa).

Residue Asp87 is the Proton acceptor of the active site.

It belongs to the Maf family. YhdE subfamily. It depends on a divalent metal cation as a cofactor.

Its subcellular location is the cytoplasm. It catalyses the reaction dTTP + H2O = dTMP + diphosphate + H(+). The catalysed reaction is UTP + H2O = UMP + diphosphate + H(+). In terms of biological role, nucleoside triphosphate pyrophosphatase that hydrolyzes dTTP and UTP. May have a dual role in cell division arrest and in preventing the incorporation of modified nucleotides into cellular nucleic acids. This is dTTP/UTP pyrophosphatase from Aromatoleum aromaticum (strain DSM 19018 / LMG 30748 / EbN1) (Azoarcus sp. (strain EbN1)).